Reading from the N-terminus, the 458-residue chain is Transmembrane protein adipocyte-associated 1 homolog (458 aa).

Asn21 and Asn45 each carry an N-linked (GlcNAc...) asparagine glycan. The next 7 helical transmembrane spans lie at 81–101 (VILV…GSVI), 114–134 (AFTL…AYSM), 152–172 (IIIK…GLLF), 181–201 (ILIA…VQVI), 225–245 (FLFW…IMCL), 263–283 (LIYC…AALI), and 291–311 (LCFV…IIYF). N-linked (GlcNAc...) asparagine glycosylation is found at Asn323 and Asn324. Residues 409–458 (RTGSDDYAHHRDSMLSEPSTGTTTRHLKGLGPQGSLVFEDDPSSLTSLRM) form a disordered region. Basic and acidic residues predominate over residues 411-422 (GSDDYAHHRDSM).

It belongs to the UPF0359 family.

It is found in the membrane. The sequence is that of Transmembrane protein adipocyte-associated 1 homolog (tpra-1) from Caenorhabditis elegans.